The primary structure comprises 505 residues: DNA primase DnaG (505 aa).

The region spanning 167–241 (DAVIVVEGRA…DVDYVAFAPP (75 aa)) is the Toprim domain. The Mg(2+) site is built by Glu173, Asp215, and Asp217. The interval 268–410 (DEPNLREAAT…PLDNEPRSIE (143 aa)) is disordered. The span at 318–327 (AGVVAGGARS) shows a compositional bias: low complexity. Acidic residues-rich tracts occupy residues 349–376 (GEVD…DAEF) and 384–402 (PNLD…DAPL).

Belongs to the archaeal DnaG primase family. As to quaternary structure, forms a ternary complex with MCM helicase and DNA. Mg(2+) serves as cofactor.

The catalysed reaction is ssDNA + n NTP = ssDNA/pppN(pN)n-1 hybrid + (n-1) diphosphate.. RNA polymerase that catalyzes the synthesis of short RNA molecules used as primers for DNA polymerase during DNA replication. The polypeptide is DNA primase DnaG (Halorubrum lacusprofundi (strain ATCC 49239 / DSM 5036 / JCM 8891 / ACAM 34)).